The following is a 169-amino-acid chain: Acetolactate synthase small subunit (169 aa).

One can recognise an ACT domain in the interval threonine 8–serine 85.

This sequence belongs to the acetolactate synthase small subunit family. As to quaternary structure, dimer of large and small chains.

The catalysed reaction is 2 pyruvate + H(+) = (2S)-2-acetolactate + CO2. It functions in the pathway amino-acid biosynthesis; L-isoleucine biosynthesis; L-isoleucine from 2-oxobutanoate: step 1/4. It participates in amino-acid biosynthesis; L-valine biosynthesis; L-valine from pyruvate: step 1/4. The sequence is that of Acetolactate synthase small subunit (ilvH) from Mycobacterium leprae (strain TN).